Consider the following 253-residue polypeptide: Acidic endochitinase Q (253 aa).

Residues 1 to 24 (MEFSGSPMALFCCVFFLFLTGSLA) form the signal peptide. Glu-92 (proton donor) is an active-site residue. A disulfide bridge connects residues Cys-212 and Cys-244.

The protein belongs to the glycosyl hydrolase 19 family. Chitinase class I subfamily.

The protein localises to the secreted. The catalysed reaction is Random endo-hydrolysis of N-acetyl-beta-D-glucosaminide (1-&gt;4)-beta-linkages in chitin and chitodextrins.. Its function is as follows. Defense against chitin-containing fungal pathogens. This is Acidic endochitinase Q from Nicotiana tabacum (Common tobacco).